Consider the following 374-residue polypeptide: 1,3,6,8-tetrahydroxynaphthalene synthase (374 aa).

Cysteine 138 is a catalytic residue.

It belongs to the thiolase-like superfamily. Chalcone/stilbene synthases family. As to quaternary structure, homodimer.

It catalyses the reaction 5 malonyl-CoA + 5 H(+) = naphthalene-1,3,6,8-tetrol + 5 CO2 + 5 CoA + H2O. It functions in the pathway pigment biosynthesis; melanin biosynthesis. Involved in the biosynthesis of melanin but also various secondary metabolites containing a naphthoquinone ring. Catalyzes the iterative condensation of five CoA-linked malonyl units to form a pentaketide intermediate. THNS subsequently catalyzes the dual intramolecular Claisen and aldol condensations of this linear intermediate to produce the fused ring of 1,3,6,8-tetrahydroxynaphthalene (THN). This is 1,3,6,8-tetrahydroxynaphthalene synthase from Streptomyces coelicolor (strain ATCC BAA-471 / A3(2) / M145).